Here is a 420-residue protein sequence, read N- to C-terminus: RING finger protein 39 (420 aa).

An RING-type zinc finger spans residues Cys-88–Gly-135. A B30.2/SPRY domain is found at Asp-210–Ser-420.

Expressed in testis.

It is found in the cytoplasm. It catalyses the reaction S-ubiquitinyl-[E2 ubiquitin-conjugating enzyme]-L-cysteine + [acceptor protein]-L-lysine = [E2 ubiquitin-conjugating enzyme]-L-cysteine + N(6)-ubiquitinyl-[acceptor protein]-L-lysine.. It functions in the pathway protein modification; protein ubiquitination. In terms of biological role, plays an inhibitory role in anti-RNA viral innate immunity by targeting the adapter DDX3X and promoting its 'Lys-48'-linked polyubiquitination. Alternatively, enhances the cGAS-STING pathway activation by promoting 'Lys-63'-linked ubiquitination of STING1, facilitating the STING1-TBK1 complex formation and STING1 activation. Its function is as follows. (Microbial infection) Plays a positive role in human immunodeficiency virus (HIV-1) replication. The polypeptide is RING finger protein 39 (RNF39) (Homo sapiens (Human)).